The chain runs to 292 residues: Pantothenate synthetase (292 aa).

30-37 is a binding site for ATP; sequence MGFLHIGH. Histidine 37 (proton donor) is an active-site residue. Glutamine 61 is a (R)-pantoate binding site. Glutamine 61 serves as a coordination point for beta-alanine. An ATP-binding site is contributed by 147–150; it reads GEKD. Residue glutamine 153 participates in (R)-pantoate binding. Residues valine 176 and 184-187 each bind ATP; that span reads CSSR.

The protein belongs to the pantothenate synthetase family. Homodimer.

It is found in the cytoplasm. The enzyme catalyses (R)-pantoate + beta-alanine + ATP = (R)-pantothenate + AMP + diphosphate + H(+). The protein operates within cofactor biosynthesis; (R)-pantothenate biosynthesis; (R)-pantothenate from (R)-pantoate and beta-alanine: step 1/1. Functionally, catalyzes the condensation of pantoate with beta-alanine in an ATP-dependent reaction via a pantoyl-adenylate intermediate. In Agrobacterium fabrum (strain C58 / ATCC 33970) (Agrobacterium tumefaciens (strain C58)), this protein is Pantothenate synthetase.